The primary structure comprises 251 residues: UDP-N-acetylglucosamine--dolichyl-phosphate N-acetylglucosaminyltransferase (251 aa).

The helical transmembrane segment at 150–167 threads the bilayer; that stretch reads VGNLGLSFITFLLGGYYV.

The protein belongs to the glycosyltransferase 2 family.

The protein localises to the cell membrane. The enzyme catalyses a di-trans,poly-cis-dolichyl phosphate + UDP-N-acetyl-alpha-D-glucosamine = an N-acetyl-alpha-D-glucosaminyl-phospho-di-trans,poly-cis-dolichol + UDP. It functions in the pathway cell surface structure biogenesis; S-layer biogenesis. Its pathway is protein modification; protein glycosylation. In terms of biological role, involved in the assembly of an N-linked disaccharide that decorates the S-layer glycoprotein and flagellins. AglK initiates N-linked glycosylation through the formation of alpha-linked dolichyl monophosphate N-acetylglucosamine. It catalyzes the transfer of GlcNAc from the donor substrate UDP-GlcNAc to dolichyl phosphate C55 (Dol-P) to yield Dol-P-GlcNAc. AglK reaction proceeds with retention of stereochemistry. The reaction is specific for UDP-GlcNAc. AglK shows a stronger preference for short dolichol (C55-60 Dol-P) substrates compared with the longer (C85-105 Dol-P). This Methanococcus voltae protein is UDP-N-acetylglucosamine--dolichyl-phosphate N-acetylglucosaminyltransferase.